The following is a 262-amino-acid chain: Cap-specific mRNA (nucleoside-2'-O-)-methyltransferase (262 aa).

One can recognise a RrmJ-type SAM-dependent 2'-O-MTase domain in the interval 34–226 (TRRPRCWRKL…ERYLICFNKL (193 aa)). S-adenosyl-L-methionine contacts are provided by Gly-67 and Asp-140. Catalysis depends on Lys-180, which acts as the Proton acceptor.

It carries out the reaction a 5'-end (N(7)-methyl 5'-triphosphoguanosine)-ribonucleoside in mRNA + S-adenosyl-L-methionine = a 5'-end (N(7)-methyl 5'-triphosphoguanosine)-(2'-O-methyl-ribonucleoside) in mRNA + S-adenosyl-L-homocysteine + H(+). Its function is as follows. S-adenosyl-L-methionine-dependent methyltransferase that mediates mRNA cap 2'-O-ribose methylation to the 5'-cap structure of late viral transcripts. The chain is Cap-specific mRNA (nucleoside-2'-O-)-methyltransferase from Lepidoptera (butterflies and moths).